A 132-amino-acid chain; its full sequence is Antimicrobial protein Ace-AMP1 (132 aa).

The N-terminal stretch at 1 to 27 (MVRVVSLLAASTFILLIMIISSPYANS) is a signal peptide. 4 disulfides stabilise this stretch: Cys31/Cys76, Cys41/Cys54, Cys55/Cys100, and Cys74/Cys116.

Belongs to the plant LTP family. Highly divergent. In terms of assembly, monomer.

Functionally, antifungal and antibacterial activity against the Gram-positive bacteria B.megaterium and S.lutea. The protein is Antimicrobial protein Ace-AMP1 of Allium cepa (Onion).